The sequence spans 135 residues: uncharacterized protein (135 aa).

This is an uncharacterized protein from Sinorhizobium fredii (strain NBRC 101917 / NGR234).